We begin with the raw amino-acid sequence, 503 residues long: MAKALPIMFQGTHSDAGKSVIATAFCRMFAQDGWKTAPFKSQNMSLNSYVTPDGNEIGRAQGIQAEAAGVAARAEMNPILIKPSREHESQIVVLGKPYGNMQAFAYRNEFFHQGLAVIRQSLETLMNEYDRIVIEGAGSPAEVNLNDRELVNMRIARLANAPVVLIGDIERGGVFASLVGTLSLLEPEDRKRVIGVIINKFRGDVALLKPGLDWFEQHTGVPVLGVVPYLPDLAIDAEDSLSLERFASSVGGEEAIDVAVIRCPKIANFTDIDPLLAEPDCRVRLVTHGDELGAPDVIVLPGSKNTIEDLIYMKKRGLASRIVSLVNEGKARVVGLCGGYQMLGAVIRDPYGVETPLPEVKGLGLLPIETTLERTKITIRTEGMLTWAGERFSVQGYEIHMGRSAPLPGYAPLIEADGRHEGAKHSDERVLGTYMHDLFHNDAFRTAFFNNIRRQKGIAPSGVRLFRSLKEKAFDRLAAHVRQHVAVERIEQMMRQFGCRDHS.

A GATase cobBQ-type domain is found at 255–444 (AIDVAVIRCP…MHDLFHNDAF (190 aa)). C337 acts as the Nucleophile in catalysis. Residue H436 is part of the active site.

The protein belongs to the CobB/CobQ family. CobQ subfamily.

Its pathway is cofactor biosynthesis; adenosylcobalamin biosynthesis. Catalyzes amidations at positions B, D, E, and G on adenosylcobyrinic A,C-diamide. NH(2) groups are provided by glutamine, and one molecule of ATP is hydrogenolyzed for each amidation. This is Cobyric acid synthase from Geobacillus kaustophilus (strain HTA426).